Here is a 105-residue protein sequence, read N- to C-terminus: UPF0235 protein A1E_05380 (105 aa).

This sequence belongs to the UPF0235 family.

This chain is UPF0235 protein A1E_05380, found in Rickettsia canadensis (strain McKiel).